Here is a 765-residue protein sequence, read N- to C-terminus: Putative chloride channel-like protein CLC-g (765 aa).

A run of 12 helical transmembrane segments spans residues valine 67–alanine 87, phenylalanine 116–phenylalanine 136, leucine 167–alanine 187, methionine 190–arginine 210, glycine 232–leucine 252, alanine 262–isoleucine 282, valine 315–leucine 335, isoleucine 355–leucine 375, phenylalanine 438–valine 458, glycine 462–leucine 482, alanine 494–valine 514, and isoleucine 515–isoleucine 535. One can recognise a CBS 1 domain in the interval methionine 568–serine 640. A Phosphoserine modification is found at serine 646. Positions phenylalanine 687 to serine 748 constitute a CBS 2 domain. A helical transmembrane segment spans residues histidine 715 to histidine 735.

Belongs to the chloride channel (TC 2.A.49) family. Homodimer. Interacts with PP2A5.

It localises to the membrane. Putative voltage-gated chloride channel. The chain is Putative chloride channel-like protein CLC-g (CLC-G) from Arabidopsis thaliana (Mouse-ear cress).